Consider the following 162-residue polypeptide: Cyclic pyranopterin monophosphate synthase (162 aa).

Substrate contacts are provided by residues Leu-79–His-81 and Met-117–Glu-118. Asp-132 is an active-site residue.

It belongs to the MoaC family. Homohexamer; trimer of dimers.

The catalysed reaction is (8S)-3',8-cyclo-7,8-dihydroguanosine 5'-triphosphate = cyclic pyranopterin phosphate + diphosphate. It participates in cofactor biosynthesis; molybdopterin biosynthesis. Catalyzes the conversion of (8S)-3',8-cyclo-7,8-dihydroguanosine 5'-triphosphate to cyclic pyranopterin monophosphate (cPMP). In Bordetella petrii (strain ATCC BAA-461 / DSM 12804 / CCUG 43448), this protein is Cyclic pyranopterin monophosphate synthase.